A 173-amino-acid chain; its full sequence is Alpha-crystallin A chain (173 aa).

At methionine 1 the chain carries N-acetylmethionine. Residues 1–63 (MDVTIQHPWF…RTVLDSGISE (63 aa)) are required for complex formation with BFSP1 and BFSP2. Glutamine 6 is subject to Deamidated glutamine; partial. Serine 45 is modified (phosphoserine). Deamidated glutamine; partial is present on residues glutamine 50 and glutamine 90. The region spanning 52 to 162 (LFRTVLDSGI…SHSERAIPVS (111 aa)) is the sHSP domain. Lysine 99 is subject to N6-acetyllysine. A Zn(2+)-binding site is contributed by histidine 100. Asparagine 101 carries the post-translational modification Deamidated asparagine; partial. The Zn(2+) site is built by glutamate 102 and histidine 107. The residue at position 122 (serine 122) is a Phosphoserine. A Deamidated asparagine; partial modification is found at asparagine 123. A disulfide bond links cysteine 131 and cysteine 142. Glutamine 147 carries the post-translational modification Deamidated glutamine; partial. The segment at 149 to 173 (GMDASHSERAIPVSREEKPSSAPSS) is disordered. The segment covering 153 to 167 (SHSERAIPVSREEKP) has biased composition (basic and acidic residues). Histidine 154 contacts Zn(2+). A glycan (O-linked (GlcNAc) serine) is linked at serine 162.

The protein belongs to the small heat shock protein (HSP20) family. As to quaternary structure, heteromer composed of three CRYAA and one CRYAB subunits. Inter-subunit bridging via zinc ions enhances stability, which is crucial as there is no protein turn over in the lens. Can also form homodimers and homotetramers (dimers of dimers) which serve as the building blocks of homooligomers. Within homooligomers, the zinc-binding motif is created from residues of 3 different molecules. His-100 and Glu-102 from one molecule are ligands of the zinc ion, and His-107 and His-154 residues from additional molecules complete the site with tetrahedral coordination geometry. Part of a complex required for lens intermediate filament formation composed of BFSP1, BFSP2 and CRYAA. In terms of processing, undergoes age-dependent proteolytical cleavage at the C-terminus.

Its subcellular location is the cytoplasm. It is found in the nucleus. Contributes to the transparency and refractive index of the lens. In its oxidized form (absence of intramolecular disulfide bond), acts as a chaperone, preventing aggregation of various proteins under a wide range of stress conditions. Required for the correct formation of lens intermediate filaments as part of a complex composed of BFSP1, BFSP2 and CRYAA. In Loxodonta africana (African elephant), this protein is Alpha-crystallin A chain (CRYAA).